The following is a 126-amino-acid chain: Urease subunit beta (126 aa).

Belongs to the urease beta subunit family. As to quaternary structure, heterotrimer of UreA (gamma), UreB (beta) and UreC (alpha) subunits. Three heterotrimers associate to form the active enzyme.

Its subcellular location is the cytoplasm. It catalyses the reaction urea + 2 H2O + H(+) = hydrogencarbonate + 2 NH4(+). The protein operates within nitrogen metabolism; urea degradation; CO(2) and NH(3) from urea (urease route): step 1/1. The sequence is that of Urease subunit beta from Frankia casuarinae (strain DSM 45818 / CECT 9043 / HFP020203 / CcI3).